Here is a 137-residue protein sequence, read N- to C-terminus: Ribonuclease VapC3 (137 aa).

The 118-residue stretch at 12-129 folds into the PINc domain; that stretch reads VVVDASAMVD…LTTDERLARA (118 aa). Residues Asp-15 and Asp-105 each contribute to the Mg(2+) site.

It belongs to the PINc/VapC protein family. Mg(2+) is required as a cofactor.

Toxic component of a type II toxin-antitoxin (TA) system. An RNase. Its toxic effect is neutralized by coexpression with cognate antitoxin VapB3. This Mycobacterium tuberculosis (strain CDC 1551 / Oshkosh) protein is Ribonuclease VapC3.